Here is a 442-residue protein sequence, read N- to C-terminus: Limonoid 1-O-acetyltransferse (442 aa).

Residues His155 and Asp381 each act as proton acceptor in the active site.

The protein belongs to the plant acyltransferase family. As to quaternary structure, monomer.

The enzyme catalyses (1S)-1-hydroxy-luvungin A + acetyl-CoA = (1S)-1-acetoxy-luvungin A + CoA. Its pathway is secondary metabolite biosynthesis; terpenoid biosynthesis. Its function is as follows. Acetyltransferase involved in the biosynthesis of limonoids triterpene natural products such as limonin, a compound with insecticidal activity responsible for the bitter taste in citrus. Catalyzes the formation of (1S)-1-acetoxy-luvungin A from (1S)-1-hydroxy-luvungin A. The chain is Limonoid 1-O-acetyltransferse from Citrus sinensis (Sweet orange).